A 451-amino-acid polypeptide reads, in one-letter code: Alpha-galactosidase (451 aa).

5–71 (PKITFIGAGS…ASGKITCHTQ (67 aa)) contacts NAD(+). Asn-151 provides a ligand contact to substrate. Position 173 (Cys-173) interacts with Mn(2+). His-174 (proton donor) is an active-site residue. His-203 provides a ligand contact to Mn(2+). Arg-287 contacts substrate.

This sequence belongs to the glycosyl hydrolase 4 family. As to quaternary structure, homodimer. NAD(+) is required as a cofactor. Requires Mn(2+) as cofactor.

The catalysed reaction is Hydrolysis of terminal, non-reducing alpha-D-galactose residues in alpha-D-galactosides, including galactose oligosaccharides, galactomannans and galactolipids.. The protein is Alpha-galactosidase (melA) of Escherichia coli (strain K12).